A 38-amino-acid chain; its full sequence is Photosystem II reaction center protein L (38 aa).

A helical transmembrane segment spans residues Ser17–Phe37.

Belongs to the PsbL family. As to quaternary structure, PSII is composed of 1 copy each of membrane proteins PsbA, PsbB, PsbC, PsbD, PsbE, PsbF, PsbH, PsbI, PsbJ, PsbK, PsbL, PsbM, PsbT, PsbX, PsbY, PsbZ, Psb30/Ycf12, at least 3 peripheral proteins of the oxygen-evolving complex and a large number of cofactors. It forms dimeric complexes.

It localises to the plastid membrane. Its function is as follows. One of the components of the core complex of photosystem II (PSII). PSII is a light-driven water:plastoquinone oxidoreductase that uses light energy to abstract electrons from H(2)O, generating O(2) and a proton gradient subsequently used for ATP formation. It consists of a core antenna complex that captures photons, and an electron transfer chain that converts photonic excitation into a charge separation. This subunit is found at the monomer-monomer interface and is required for correct PSII assembly and/or dimerization. The sequence is that of Photosystem II reaction center protein L from Aneura mirabilis (Parasitic liverwort).